The primary structure comprises 187 residues: Peptide deformylase (187 aa).

The Fe cation site is built by cysteine 107 and histidine 149. The active site involves glutamate 150. Histidine 153 contacts Fe cation.

The protein belongs to the polypeptide deformylase family. Fe(2+) serves as cofactor.

The enzyme catalyses N-terminal N-formyl-L-methionyl-[peptide] + H2O = N-terminal L-methionyl-[peptide] + formate. Removes the formyl group from the N-terminal Met of newly synthesized proteins. Requires at least a dipeptide for an efficient rate of reaction. N-terminal L-methionine is a prerequisite for activity but the enzyme has broad specificity at other positions. This chain is Peptide deformylase, found in Picosynechococcus sp. (strain ATCC 27264 / PCC 7002 / PR-6) (Agmenellum quadruplicatum).